The sequence spans 456 residues: Bifunctional protein GlmU (456 aa).

The segment at 1-230 is pyrophosphorylase; it reads MDKRFAVILA…FQETLGVNDR (230 aa). UDP-N-acetyl-alpha-D-glucosamine is bound by residues 9-12, Lys-23, Gln-73, and 78-79; these read LAAG and GT. Asp-103 contributes to the Mg(2+) binding site. 4 residues coordinate UDP-N-acetyl-alpha-D-glucosamine: Gly-140, Glu-155, Asn-170, and Asn-228. Residue Asn-228 participates in Mg(2+) binding. Residues 231–251 are linker; it reads VALSQAEMYMKERINKRHMQN. The tract at residues 252-456 is N-acetyltransferase; the sequence is GVTLIDPMNT…EDYVKNIHKK (205 aa). Positions 333 and 351 each coordinate UDP-N-acetyl-alpha-D-glucosamine. His-363 (proton acceptor) is an active-site residue. The UDP-N-acetyl-alpha-D-glucosamine site is built by Tyr-366 and Asn-377. Acetyl-CoA-binding positions include 386-387, Ala-423, and Arg-440; that span reads NY.

This sequence in the N-terminal section; belongs to the N-acetylglucosamine-1-phosphate uridyltransferase family. In the C-terminal section; belongs to the transferase hexapeptide repeat family. Homotrimer. It depends on Mg(2+) as a cofactor.

The protein resides in the cytoplasm. It catalyses the reaction alpha-D-glucosamine 1-phosphate + acetyl-CoA = N-acetyl-alpha-D-glucosamine 1-phosphate + CoA + H(+). It carries out the reaction N-acetyl-alpha-D-glucosamine 1-phosphate + UTP + H(+) = UDP-N-acetyl-alpha-D-glucosamine + diphosphate. The protein operates within nucleotide-sugar biosynthesis; UDP-N-acetyl-alpha-D-glucosamine biosynthesis; N-acetyl-alpha-D-glucosamine 1-phosphate from alpha-D-glucosamine 6-phosphate (route II): step 2/2. It participates in nucleotide-sugar biosynthesis; UDP-N-acetyl-alpha-D-glucosamine biosynthesis; UDP-N-acetyl-alpha-D-glucosamine from N-acetyl-alpha-D-glucosamine 1-phosphate: step 1/1. Its pathway is bacterial outer membrane biogenesis; LPS lipid A biosynthesis. Catalyzes the last two sequential reactions in the de novo biosynthetic pathway for UDP-N-acetylglucosamine (UDP-GlcNAc). The C-terminal domain catalyzes the transfer of acetyl group from acetyl coenzyme A to glucosamine-1-phosphate (GlcN-1-P) to produce N-acetylglucosamine-1-phosphate (GlcNAc-1-P), which is converted into UDP-GlcNAc by the transfer of uridine 5-monophosphate (from uridine 5-triphosphate), a reaction catalyzed by the N-terminal domain. This chain is Bifunctional protein GlmU, found in Bacillus velezensis (strain DSM 23117 / BGSC 10A6 / LMG 26770 / FZB42) (Bacillus amyloliquefaciens subsp. plantarum).